The sequence spans 302 residues: 4-hydroxy-tetrahydrodipicolinate synthase (302 aa).

Thr-55 contacts pyruvate. Tyr-144 functions as the Proton donor/acceptor in the catalytic mechanism. Lys-172 serves as the catalytic Schiff-base intermediate with substrate. Val-214 lines the pyruvate pocket.

The protein belongs to the DapA family. Homotetramer; dimer of dimers.

Its subcellular location is the cytoplasm. The catalysed reaction is L-aspartate 4-semialdehyde + pyruvate = (2S,4S)-4-hydroxy-2,3,4,5-tetrahydrodipicolinate + H2O + H(+). It functions in the pathway amino-acid biosynthesis; L-lysine biosynthesis via DAP pathway; (S)-tetrahydrodipicolinate from L-aspartate: step 3/4. Its function is as follows. Catalyzes the condensation of (S)-aspartate-beta-semialdehyde [(S)-ASA] and pyruvate to 4-hydroxy-tetrahydrodipicolinate (HTPA). The sequence is that of 4-hydroxy-tetrahydrodipicolinate synthase from Prochlorococcus marinus (strain MIT 9303).